Reading from the N-terminus, the 138-residue chain is Molluscan insulin-related peptide 5 (138 aa).

Residues 1–31 form the signal peptide; that stretch reads MAGVRLVFTKAFMVTVLLTLLLNIGVKPAEG. At Q32 the chain carries Pyrrolidone carboxylic acid. 3 cysteine pairs are disulfide-bonded: C48-C124, C60-C137, and C123-C128. A propeptide spans 72–84 (C-beta peptide like); it reads DAETGWLLPETMV. Positions 87–111 are cleaved as a propeptide — C-alpha peptide like; it reads NAQTDLDDPLRNIKLSSESALTYLT. Q114 bears the Pyrrolidone carboxylic acid mark.

The protein belongs to the insulin family. In terms of assembly, heterodimer of a B chain and an A chain linked by two disulfide bonds. Expressed in the cerebral light-green cells which are giant neuroendocrines cells involved in the control of growth.

It is found in the cytoplasmic vesicle. Its subcellular location is the secretory vesicle. The protein is Molluscan insulin-related peptide 5 of Lymnaea stagnalis (Great pond snail).